Here is a 148-residue protein sequence, read N- to C-terminus: Mediator of RNA polymerase II transcription subunit 31 (148 aa).

Belongs to the Mediator complex subunit 31 family. Component of the Mediator complex.

The protein resides in the nucleus. Component of the Mediator complex, a coactivator involved in the regulated transcription of nearly all RNA polymerase II-dependent genes. Mediator functions as a bridge to convey information from gene-specific regulatory proteins to the basal RNA polymerase II transcription machinery. Mediator is recruited to promoters by direct interactions with regulatory proteins and serves as a scaffold for the assembly of a functional preinitiation complex with RNA polymerase II and the general transcription factors. The polypeptide is Mediator of RNA polymerase II transcription subunit 31 (Taenia solium (Pork tapeworm)).